The primary structure comprises 548 residues: Sesquiterpene synthase 12 (548 aa).

The Mg(2+) site is built by aspartate 299, aspartate 303, aspartate 444, and glutamate 452. The DDXXD motif motif lies at aspartate 299 to aspartate 303.

This sequence belongs to the terpene synthase family. Tpsa subfamily. It depends on Mg(2+) as a cofactor. Mn(2+) is required as a cofactor. In terms of tissue distribution, mostly expressed in leaves, to a lower extent in stems, trichomes, flowers and roots and, at low levels, in fruits.

The catalysed reaction is (2E,6E)-farnesyl diphosphate = alpha-humulene + diphosphate. It carries out the reaction (2E,6E)-farnesyl diphosphate = (-)-(E)-beta-caryophyllene + diphosphate. The enzyme catalyses (2Z,6Z)-farnesyl diphosphate = beta-bisabolene + diphosphate. It catalyses the reaction (2E)-geranyl diphosphate = terpinolene + diphosphate. The catalysed reaction is (2E)-geranyl diphosphate = limonene + diphosphate. It carries out the reaction (2E)-geranyl diphosphate = beta-myrcene + diphosphate. The enzyme catalyses (2E)-geranyl diphosphate = (E)-beta-ocimene + diphosphate. It catalyses the reaction (2Z,6Z)-farnesyl diphosphate = gamma-curcumene + diphosphate. The catalysed reaction is (2Z,6Z)-farnesyl diphosphate = (Z)-gamma-bisabolene + diphosphate. Its pathway is secondary metabolite biosynthesis; terpenoid biosynthesis. Functionally, sesquiterpene synthase involved in the biosynthesis of volatile compounds. Mediates the conversion of (2E,6E)-farnesyl diphosphate (FPP) into (1E,4E,8E)-alpha-humulene and (-)-(E)-beta-caryophyllene, and of (2Z,6Z)-farnesyl diphosphate ((ZZ)-FPP) into beta-bisabolene, gamma-curcumene and (Z)-gamma-bisabolene. Can act with a low efficiency as a monoterpene synthase with geranyl diphosphate (GPP) as substrate, thus producing beta-myrcene, (E)-beta-ocimene, limonene and terpinolene. This chain is Sesquiterpene synthase 12, found in Solanum lycopersicum (Tomato).